We begin with the raw amino-acid sequence, 477 residues long: 3-isopropylmalate dehydratase large subunit (477 aa).

[4Fe-4S] cluster contacts are provided by cysteine 351, cysteine 411, and cysteine 414.

The protein belongs to the aconitase/IPM isomerase family. LeuC type 1 subfamily. Heterodimer of LeuC and LeuD. [4Fe-4S] cluster is required as a cofactor.

It carries out the reaction (2R,3S)-3-isopropylmalate = (2S)-2-isopropylmalate. Its pathway is amino-acid biosynthesis; L-leucine biosynthesis; L-leucine from 3-methyl-2-oxobutanoate: step 2/4. Its function is as follows. Catalyzes the isomerization between 2-isopropylmalate and 3-isopropylmalate, via the formation of 2-isopropylmaleate. The sequence is that of 3-isopropylmalate dehydratase large subunit from Kineococcus radiotolerans (strain ATCC BAA-149 / DSM 14245 / SRS30216).